Consider the following 163-residue polypeptide: Zinc finger A20 and AN1 domain-containing stress-associated protein 3 (163 aa).

The A20-type zinc-finger motif lies at 7 to 41; that stretch reads LQEPRLCANNCGFFGSTATQNLCSKCFRDLQHQEQ. Cysteine 13, cysteine 17, cysteine 29, and cysteine 32 together coordinate Zn(2+). The segment at 57-101 is disordered; it reads VGAAASSSVSPPPPPPADSKEIVEAKSEKRAAAEPEEADGPPQDP. The span at 74-89 shows a compositional bias: basic and acidic residues; that stretch reads DSKEIVEAKSEKRAAA. An AN1-type zinc finger spans residues 98–144; that stretch reads PQDPKRCLTCRRRVGITGFRCRCGFVFCGTHRYAEQHECSFDFKRMG. Cysteine 104, cysteine 107, cysteine 118, cysteine 120, cysteine 125, histidine 128, histidine 134, and cysteine 136 together coordinate Zn(2+).

Functionally, may be involved in environmental stress response. This Arabidopsis thaliana (Mouse-ear cress) protein is Zinc finger A20 and AN1 domain-containing stress-associated protein 3 (SAP3).